The following is a 1188-amino-acid chain: NF-X1-type zinc finger protein NFXL1 (1188 aa).

A compositionally biased stretch (basic and acidic residues) spans 1-15 (MSFQVRRDRSDDRSH). 2 disordered regions span residues 1 to 52 (MSFQ…ETLD) and 65 to 195 (QHNA…VAKE). 2 stretches are compositionally biased toward polar residues: residues 19 to 34 (HQQT…SSVV) and 168 to 186 (ASGT…TRPV). Residues 223-279 (CMICYDKVGRSANIWSCSSCYSIFHINCIKRWARAPTSVDLLAEKNQGDNWRCPGCQ) form an RING-type; degenerate zinc finger. NF-X1-type zinc fingers lie at residues 335 to 353 (CPHV…PCKA), 390 to 409 (CGRH…PCQV), 454 to 473 (CGNH…DCDL), 513 to 532 (CRLH…PCLV), 572 to 607 (CGRH…PCQK), 611 to 630 (CGQH…PCLE), 668 to 686 (CGHS…PCST), 721 to 751 (CGMH…TCRQ), and 760 to 781 (CRHT…RCEF). The R3H domain occupies 894–963 (PKWVLAVEER…KRFTVVHVTA (70 aa)). Residues 1100–1188 (SDDSWGAEDS…VVDDWEKVCE (89 aa)) are disordered. Polar residues-rich tracts occupy residues 1126–1138 (AKSN…SVNR) and 1159–1169 (EESSSSKTTGK).

The protein belongs to the NFX1 family. In terms of tissue distribution, expressed in seedlings, roots, stems, leaves, buds, flowers and siliques.

The protein resides in the nucleus. The protein operates within protein modification; protein ubiquitination. Mediates E2-dependent ubiquitination. Confers resistance to osmotic stress such as high salinity. Promotes H(2)O(2) production. Negative regulator of some defense-related genes via an salicylic acid (SA)-dependent signaling pathway. Confers susceptibility to the compatible phytopathogen Pseudomonas syringae pv. tomato strain DC3000 (Pst DC3000). Mediates resistance to type A trichothecenes (phytotoxins produced by phytopathogenic fungi). In Arabidopsis thaliana (Mouse-ear cress), this protein is NF-X1-type zinc finger protein NFXL1 (NFXL1).